We begin with the raw amino-acid sequence, 319 residues long: Acetyl-coenzyme A carboxylase carboxyl transferase subunit alpha (319 aa).

In terms of domain architecture, CoA carboxyltransferase C-terminal spans 34-295; the sequence is ELEEEVSKLK…KVRLKRDLAD (262 aa).

The protein belongs to the AccA family. As to quaternary structure, acetyl-CoA carboxylase is a heterohexamer composed of biotin carboxyl carrier protein (AccB), biotin carboxylase (AccC) and two subunits each of ACCase subunit alpha (AccA) and ACCase subunit beta (AccD).

The protein resides in the cytoplasm. The enzyme catalyses N(6)-carboxybiotinyl-L-lysyl-[protein] + acetyl-CoA = N(6)-biotinyl-L-lysyl-[protein] + malonyl-CoA. The protein operates within lipid metabolism; malonyl-CoA biosynthesis; malonyl-CoA from acetyl-CoA: step 1/1. Functionally, component of the acetyl coenzyme A carboxylase (ACC) complex. First, biotin carboxylase catalyzes the carboxylation of biotin on its carrier protein (BCCP) and then the CO(2) group is transferred by the carboxyltransferase to acetyl-CoA to form malonyl-CoA. The protein is Acetyl-coenzyme A carboxylase carboxyl transferase subunit alpha of Pseudoalteromonas translucida (strain TAC 125).